A 30-amino-acid polypeptide reads, in one-letter code: rRNA N-glycosylase (30 aa).

It belongs to the ribosome-inactivating protein family. Type 1 RIP subfamily. In terms of tissue distribution, expressed in seeds.

The catalysed reaction is Endohydrolysis of the N-glycosidic bond at one specific adenosine on the 28S rRNA.. In terms of biological role, exhibits N-glycosylase activity. Catalyzes the release of one adenine from a ribosome. Acts as a ribosome-inactivating protein and inhibits protein synthesis in a rabbit-reticulocyte lysate system and in various cell lines (in vitro). The protein is rRNA N-glycosylase of Saponaria ocymoides (Rock soapwort).